Consider the following 127-residue polypeptide: Multifunctional methyltransferase subunit trm112 (127 aa).

Residues 2–123 enclose the TRM112 domain; that stretch reads KVMTLNFLTC…KNGVANFLLP (122 aa).

This sequence belongs to the TRM112 family. As to quaternary structure, heterodimer of mtq2-rmt-1/trm112, forming the eRF1 methyltransferase. Rmt-1/trm112 is necessary for the solubility and activity of the catalytic subunit mtq2. Interacts with trm11; required for full tRNA methyltransferase activity. Interacts with bud23; required for full rRNA methyltransferase activity.

It localises to the cytoplasm. The protein resides in the nucleus. Its function is as follows. Acts as an activator of both rRNA/tRNA and protein methyltransferases. Together with methyltransferase mtq2, required for the methylation of eRF1 on 'Gln-182'. Together with methyltransferase trm11, required for the formation of 2-methylguanosine at position 10 (m2G10) in tRNA. Together with methyltransferase bud23, required for the formation of a 7-methylguanine in 18S rRNA. Involved in biogenesis of both 40S and 60S ribosomal subunits. This chain is Multifunctional methyltransferase subunit trm112 (rmt-1), found in Neurospora crassa (strain ATCC 24698 / 74-OR23-1A / CBS 708.71 / DSM 1257 / FGSC 987).